The primary structure comprises 34 residues: Photosystem II reaction center protein M (34 aa).

A helical membrane pass occupies residues 5–25 (ILAFIATALFILIPTAFLLIL).

The protein belongs to the PsbM family. In terms of assembly, PSII is composed of 1 copy each of membrane proteins PsbA, PsbB, PsbC, PsbD, PsbE, PsbF, PsbH, PsbI, PsbJ, PsbK, PsbL, PsbM, PsbT, PsbX, PsbY, PsbZ, Psb30/Ycf12, at least 3 peripheral proteins of the oxygen-evolving complex and a large number of cofactors. It forms dimeric complexes.

Its subcellular location is the plastid. The protein localises to the chloroplast thylakoid membrane. Functionally, one of the components of the core complex of photosystem II (PSII). PSII is a light-driven water:plastoquinone oxidoreductase that uses light energy to abstract electrons from H(2)O, generating O(2) and a proton gradient subsequently used for ATP formation. It consists of a core antenna complex that captures photons, and an electron transfer chain that converts photonic excitation into a charge separation. This subunit is found at the monomer-monomer interface. This Angiopteris evecta (Mule's foot fern) protein is Photosystem II reaction center protein M.